Consider the following 159-residue polypeptide: Cyclic pyranopterin monophosphate synthase (159 aa).

Residues L75–H77 and M113–E114 contribute to the substrate site. D128 is an active-site residue.

Belongs to the MoaC family. In terms of assembly, homohexamer; trimer of dimers.

It catalyses the reaction (8S)-3',8-cyclo-7,8-dihydroguanosine 5'-triphosphate = cyclic pyranopterin phosphate + diphosphate. It participates in cofactor biosynthesis; molybdopterin biosynthesis. Its function is as follows. Catalyzes the conversion of (8S)-3',8-cyclo-7,8-dihydroguanosine 5'-triphosphate to cyclic pyranopterin monophosphate (cPMP). The protein is Cyclic pyranopterin monophosphate synthase of Cereibacter sphaeroides (strain ATCC 17029 / ATH 2.4.9) (Rhodobacter sphaeroides).